A 163-amino-acid polypeptide reads, in one-letter code: Cyanate hydratase (163 aa).

Active-site residues include R103, E106, and S129.

Belongs to the cyanase family.

It carries out the reaction cyanate + hydrogencarbonate + 3 H(+) = NH4(+) + 2 CO2. Its function is as follows. Catalyzes the reaction of cyanate with bicarbonate to produce ammonia and carbon dioxide. The protein is Cyanate hydratase of Ajellomyces capsulatus (strain G186AR / H82 / ATCC MYA-2454 / RMSCC 2432) (Darling's disease fungus).